The sequence spans 214 residues: Adenylate kinase (214 aa).

10-15 lines the ATP pocket; the sequence is GAGKGT. The interval 30 to 59 is NMP; it reads STGDMLRAAVKAGTPLGLEAKKVMDAGQLV. Residues Thr-31, Arg-36, 57-59, 85-88, and Gln-92 each bind AMP; these read QLV and GFPR. The interval 122–159 is LID; sequence GRRVHSGSGRVYHVVFNPPKVEGKDDVTGEDLSIRPDD. ATP-binding positions include Arg-123 and 132 to 133; that span reads VY. Residues Arg-156 and Arg-167 each contribute to the AMP site. Gln-200 serves as a coordination point for ATP.

This sequence belongs to the adenylate kinase family. Monomer.

Its subcellular location is the cytoplasm. The enzyme catalyses AMP + ATP = 2 ADP. It participates in purine metabolism; AMP biosynthesis via salvage pathway; AMP from ADP: step 1/1. Its function is as follows. Catalyzes the reversible transfer of the terminal phosphate group between ATP and AMP. Plays an important role in cellular energy homeostasis and in adenine nucleotide metabolism. This chain is Adenylate kinase, found in Shewanella frigidimarina (strain NCIMB 400).